An 85-amino-acid chain; its full sequence is Anaphase-promoting complex subunit CDC26 (85 aa).

Residues 7–38 (TRLELKLDDIEEFENIRKDLETRKKQKEDVEV) adopt a coiled-coil conformation. Positions 30–85 (KKQKEDVEVVGGSDGEGAIGLSSDPKSREQMINDRIGYKPQPKPNNRSSQFGSLEF) are disordered. 2 positions are modified to phosphoserine: S42 and S82. A compositionally biased stretch (polar residues) spans 73-85 (PNNRSSQFGSLEF).

Belongs to the CDC26 family. In terms of assembly, V-shaped homodimer. Interacts with CDC16. The mammalian APC/C is composed at least of 14 distinct subunits ANAPC1, ANAPC2, CDC27/APC3, ANAPC4, ANAPC5, CDC16/APC6, ANAPC7, CDC23/APC8, ANAPC10, ANAPC11, CDC26/APC12, ANAPC13, ANAPC15 and ANAPC16 that assemble into a complex of at least 19 chains with a combined molecular mass of around 1.2 MDa; APC/C interacts with FZR1 and FBXO5. Interacts with FBXO43.

The protein resides in the nucleus. Its pathway is protein modification; protein ubiquitination. In terms of biological role, component of the anaphase promoting complex/cyclosome (APC/C), a cell cycle-regulated E3 ubiquitin ligase that controls progression through mitosis and the G1 phase of the cell cycle. The APC/C complex acts by mediating ubiquitination and subsequent degradation of target proteins: it mainly mediates the formation of 'Lys-11'-linked polyubiquitin chains and, to a lower extent, the formation of 'Lys-48'- and 'Lys-63'-linked polyubiquitin chains. The APC/C complex catalyzes assembly of branched 'Lys-11'-/'Lys-48'-linked branched ubiquitin chains on target proteins. May recruit the E2 ubiquitin-conjugating enzymes to the complex. The chain is Anaphase-promoting complex subunit CDC26 (CDC26) from Homo sapiens (Human).